The chain runs to 213 residues: Octanoyltransferase (213 aa).

Positions 32–207 constitute a BPL/LPL catalytic domain; that stretch reads DHTPDEIWLV…KLLALLNNPP (176 aa). Substrate contacts are provided by residues 71–78, 138–140, and 151–153; these read RGGQVTYH, SLG, and GLA. The active-site Acyl-thioester intermediate is Cys-169.

It belongs to the LipB family.

The protein resides in the cytoplasm. It catalyses the reaction octanoyl-[ACP] + L-lysyl-[protein] = N(6)-octanoyl-L-lysyl-[protein] + holo-[ACP] + H(+). It functions in the pathway protein modification; protein lipoylation via endogenous pathway; protein N(6)-(lipoyl)lysine from octanoyl-[acyl-carrier-protein]: step 1/2. In terms of biological role, catalyzes the transfer of endogenously produced octanoic acid from octanoyl-acyl-carrier-protein onto the lipoyl domains of lipoate-dependent enzymes. Lipoyl-ACP can also act as a substrate although octanoyl-ACP is likely to be the physiological substrate. This is Octanoyltransferase from Enterobacter sp. (strain 638).